A 315-amino-acid polypeptide reads, in one-letter code: Methionyl-tRNA formyltransferase (315 aa).

112–115 provides a ligand contact to (6S)-5,6,7,8-tetrahydrofolate; the sequence is SLLP.

Belongs to the Fmt family.

The catalysed reaction is L-methionyl-tRNA(fMet) + (6R)-10-formyltetrahydrofolate = N-formyl-L-methionyl-tRNA(fMet) + (6S)-5,6,7,8-tetrahydrofolate + H(+). In terms of biological role, attaches a formyl group to the free amino group of methionyl-tRNA(fMet). The formyl group appears to play a dual role in the initiator identity of N-formylmethionyl-tRNA by promoting its recognition by IF2 and preventing the misappropriation of this tRNA by the elongation apparatus. This chain is Methionyl-tRNA formyltransferase, found in Leptospira interrogans serogroup Icterohaemorrhagiae serovar copenhageni (strain Fiocruz L1-130).